The primary structure comprises 56 residues: uncharacterized protein (56 aa).

Residues 33–53 traverse the membrane as a helical segment; sequence INIIYLAIMKIIMNIIMMIMI.

It localises to the host membrane. This is an uncharacterized protein from Bos taurus (Bovine).